The following is a 122-amino-acid chain: Beta-2-microglobulin (122 aa).

Residues 1–22 (MMARIFILALLGQLCFLPYLDA) form the signal peptide. The region spanning 27–115 (PKVQVYSRHP…HLTLQEPKVV (89 aa)) is the Ig-like C1-type domain. Cys-47 and Cys-102 are joined by a disulfide.

It belongs to the beta-2-microglobulin family. Heterodimer of an alpha chain and a beta chain. Beta-2-microglobulin is the beta-chain of major histocompatibility complex class I molecules.

The protein localises to the secreted. Functionally, component of the class I major histocompatibility complex (MHC). Involved in the presentation of peptide antigens to the immune system. This Trichosurus vulpecula (Brush-tailed possum) protein is Beta-2-microglobulin (B2M).